Reading from the N-terminus, the 492-residue chain is Protein nucleotidyltransferase YdiU (492 aa).

ATP contacts are provided by G94, G96, R97, K117, D129, G130, R180, and R187. The active-site Proton acceptor is the D257. Positions 258 and 267 each coordinate Mg(2+). ATP is bound at residue D267.

The protein belongs to the SELO family. The cofactor is Mg(2+). Mn(2+) serves as cofactor.

The enzyme catalyses L-seryl-[protein] + ATP = 3-O-(5'-adenylyl)-L-seryl-[protein] + diphosphate. It carries out the reaction L-threonyl-[protein] + ATP = 3-O-(5'-adenylyl)-L-threonyl-[protein] + diphosphate. The catalysed reaction is L-tyrosyl-[protein] + ATP = O-(5'-adenylyl)-L-tyrosyl-[protein] + diphosphate. It catalyses the reaction L-histidyl-[protein] + UTP = N(tele)-(5'-uridylyl)-L-histidyl-[protein] + diphosphate. The enzyme catalyses L-seryl-[protein] + UTP = O-(5'-uridylyl)-L-seryl-[protein] + diphosphate. It carries out the reaction L-tyrosyl-[protein] + UTP = O-(5'-uridylyl)-L-tyrosyl-[protein] + diphosphate. Nucleotidyltransferase involved in the post-translational modification of proteins. It can catalyze the addition of adenosine monophosphate (AMP) or uridine monophosphate (UMP) to a protein, resulting in modifications known as AMPylation and UMPylation. The protein is Protein nucleotidyltransferase YdiU of Halalkalibacterium halodurans (strain ATCC BAA-125 / DSM 18197 / FERM 7344 / JCM 9153 / C-125) (Bacillus halodurans).